A 99-amino-acid chain; its full sequence is Large ribosomal subunit protein bL21 (99 aa).

It belongs to the bacterial ribosomal protein bL21 family. Part of the 50S ribosomal subunit. Contacts protein L20.

This protein binds to 23S rRNA in the presence of protein L20. The polypeptide is Large ribosomal subunit protein bL21 (Acholeplasma laidlawii (strain PG-8A)).